Consider the following 176-residue polypeptide: MSRVGKSPVALQGAEVALSDERITVKGPLGTISQAANSLVKVVNDNGTLKFEPVDESREANAMSGTMRALVANMVNGVTKGFERKLTLVGVGYRAQAQGDKLNLSLGFSHPVVHQMPEGIKAETPTQTEIVIKGINKQQVGQVAAEVRGYRPPEPYKGKGVRYANEVVILKETKKK.

It belongs to the universal ribosomal protein uL6 family. As to quaternary structure, part of the 50S ribosomal subunit.

In terms of biological role, this protein binds to the 23S rRNA, and is important in its secondary structure. It is located near the subunit interface in the base of the L7/L12 stalk, and near the tRNA binding site of the peptidyltransferase center. The chain is Large ribosomal subunit protein uL6 from Paraburkholderia xenovorans (strain LB400).